Here is a 633-residue protein sequence, read N- to C-terminus: Threonine--tRNA ligase (633 aa).

The TGS domain maps to 1–61; sequence MINVYFSDNS…TEDCKFEVIT (61 aa). The catalytic stretch occupies residues 242–533; that stretch reads DHRKIGKELE…LIEHHSGKLP (292 aa). Residues Cys333, His384, and His510 each coordinate Zn(2+).

This sequence belongs to the class-II aminoacyl-tRNA synthetase family. Homodimer. Requires Zn(2+) as cofactor.

Its subcellular location is the cytoplasm. The enzyme catalyses tRNA(Thr) + L-threonine + ATP = L-threonyl-tRNA(Thr) + AMP + diphosphate + H(+). Its function is as follows. Catalyzes the attachment of threonine to tRNA(Thr) in a two-step reaction: L-threonine is first activated by ATP to form Thr-AMP and then transferred to the acceptor end of tRNA(Thr). Also edits incorrectly charged L-seryl-tRNA(Thr). This chain is Threonine--tRNA ligase, found in Ehrlichia ruminantium (strain Gardel).